Reading from the N-terminus, the 125-residue chain is Large ribosomal subunit protein bL12 (125 aa).

It belongs to the bacterial ribosomal protein bL12 family. Homodimer. Part of the ribosomal stalk of the 50S ribosomal subunit. Forms a multimeric L10(L12)X complex, where L10 forms an elongated spine to which 2 to 4 L12 dimers bind in a sequential fashion. Binds GTP-bound translation factors.

Its function is as follows. Forms part of the ribosomal stalk which helps the ribosome interact with GTP-bound translation factors. Is thus essential for accurate translation. The chain is Large ribosomal subunit protein bL12 from Anaeromyxobacter dehalogenans (strain 2CP-1 / ATCC BAA-258).